Reading from the N-terminus, the 203-residue chain is N-(5'-phosphoribosyl)anthranilate isomerase (203 aa).

This sequence belongs to the TrpF family.

It carries out the reaction N-(5-phospho-beta-D-ribosyl)anthranilate = 1-(2-carboxyphenylamino)-1-deoxy-D-ribulose 5-phosphate. The protein operates within amino-acid biosynthesis; L-tryptophan biosynthesis; L-tryptophan from chorismate: step 3/5. This chain is N-(5'-phosphoribosyl)anthranilate isomerase, found in Geobacter sulfurreducens (strain ATCC 51573 / DSM 12127 / PCA).